The chain runs to 167 residues: Endoribonuclease YbeY (167 aa).

Residues H132, H136, and H142 each coordinate Zn(2+).

This sequence belongs to the endoribonuclease YbeY family. Requires Zn(2+) as cofactor.

The protein resides in the cytoplasm. In terms of biological role, single strand-specific metallo-endoribonuclease involved in late-stage 70S ribosome quality control and in maturation of the 3' terminus of the 16S rRNA. The sequence is that of Endoribonuclease YbeY from Clostridium tetani (strain Massachusetts / E88).